We begin with the raw amino-acid sequence, 505 residues long: MPRTYDEECSYIERITDVVYRIKKGFVPNMNVEGRFYVNTALEKLMFEELRNACRLDGIGGFLPAVRQIGNVAALPAIVNASIGLPDIHSGYGFAIGNIAAFDVSDPDAVVSPGGVGFDINCGVRLIRTNLSEKDVQPVKEQLAQSLFDHIPVGVGSKGIIPIGAQQFEECLEMGMDWTLREGYSWAEDKEHCEEYGRMLQADAAKVSPRAKKRGLPQLGTLGAGNHYGEVQVIDEIYDEYAASRMGIDRLGQVCIMIHCGSRGLGHQVATDSLVVMEKAMKRDNIIVNDRQLACARINSMEGQDYLKGMAAAANFAWVNRSCMTFCARQAFAKVFNTSPDDLDMHVIYDVSHNIAKIEEHLINGRPKQLCVHRKGSTRAFPPHHPLIPVDYQLTGQPVLIGGTMGTCSYVLTGTEQGMNETFATTCHGAGRALSRAKSRRNIDFQEVLNKMQAMGISIRVASPKLVMEEAPESYKNVTDVVNTCHEAGISKKSVKLRPIAVIKG.

Residues D119, C122, H227, H259, and H353 each coordinate Mn(2+). 226–230 (NHYGE) provides a ligand contact to GMP. GMP-binding positions include 353–354 (HN), 402–405 (GGTM), S409, 428–431 (HGAG), and K504. H428 (GMP-histidine intermediate) is an active-site residue.

This sequence belongs to the RtcB family. In terms of assembly, catalytic component of the tRNA-splicing ligase complex. Mn(2+) serves as cofactor.

It carries out the reaction a 3'-end 3'-phospho-ribonucleotide-RNA + a 5'-end dephospho-ribonucleoside-RNA + GTP = a ribonucleotidyl-ribonucleotide-RNA + GMP + diphosphate. The catalysed reaction is a 3'-end 2',3'-cyclophospho-ribonucleotide-RNA + a 5'-end dephospho-ribonucleoside-RNA + GTP + H2O = a ribonucleotidyl-ribonucleotide-RNA + GMP + diphosphate + H(+). In terms of biological role, catalytic subunit of the tRNA-splicing ligase complex that acts by directly joining spliced tRNA halves to mature-sized tRNAs by incorporating the precursor-derived splice junction phosphate into the mature tRNA as a canonical 3',5'-phosphodiester. May act as an RNA ligase with broad substrate specificity, and may function toward other RNAs. The protein is RNA-splicing ligase RtcB homolog of Brugia malayi (Filarial nematode worm).